A 372-amino-acid chain; its full sequence is L-selectin (372 aa).

The N-terminal stretch at 1–28 (MVFPWRCEGTYWGSRNILKLWVWTLLCC) is a signal peptide. A propeptide spanning residues 29 to 38 (DFLIHHGTHC) is cleaved from the precursor. Residues 39-332 (WTYHYSEKPM…FSKIKEGDYN (294 aa)) are Extracellular-facing. The region spanning 55–155 (KFCKQNYTDL…ACHKRKAALC (101 aa)) is the C-type lectin domain. 10 cysteine pairs are disulfide-bonded: cysteine 57-cysteine 155, cysteine 128-cysteine 147, cysteine 128-cysteine 160, cysteine 160-cysteine 171, cysteine 165-cysteine 180, cysteine 182-cysteine 191, cysteine 197-cysteine 241, cysteine 227-cysteine 254, cysteine 259-cysteine 303, and cysteine 289-cysteine 316. 2 N-linked (GlcNAc...) asparagine glycosylation sites follow: asparagine 60 and asparagine 104. Glutamate 118, asparagine 120, glutamate 126, asparagine 143, and aspartate 144 together coordinate Ca(2+). Residues 156-192 (YTASCQPGSCNGRGECVETINNHTCICDAGYYGPQCQ) form the EGF-like domain. N-linked (GlcNAc...) asparagine glycosylation occurs at asparagine 177. Sushi domains are found at residues 195–256 (VQCE…ICQV) and 257–318 (VQCE…ICQE). N-linked (GlcNAc...) asparagine glycosylation is found at asparagine 216, asparagine 226, asparagine 246, asparagine 278, asparagine 288, asparagine 308, and asparagine 320. The helical transmembrane segment at 333–355 (PLFIPVAVMVTAFSGLAFLIWLA) threads the bilayer. At 356–372 (RRLKKGKKSQERMDDPY) the chain is on the cytoplasmic side.

It belongs to the selectin/LECAM family. In terms of assembly, interaction with SELPLG/PSGL1 and PODXL2 is required for promoting recruitment and rolling of leukocytes. This interaction is dependent on the sialyl Lewis X glycan modification of SELPLG and PODXL2, and tyrosine sulfation modifications of SELPLG. Sulfation on 'Tyr-51' of SELPLG is important for L-selectin binding. N-glycosylated. In terms of tissue distribution, predominantly expressed in lymphoid tissue.

Its subcellular location is the cell membrane. In terms of biological role, calcium-dependent lectin that mediates cell adhesion by binding to glycoproteins on neighboring cells. Mediates the adherence of lymphocytes to endothelial cells of high endothelial venules in peripheral lymph nodes. Promotes initial tethering and rolling of leukocytes in endothelia. The protein is L-selectin (Sell) of Mus musculus (Mouse).